The chain runs to 238 residues: Leucyl/phenylalanyl-tRNA--protein transferase (238 aa).

This sequence belongs to the L/F-transferase family.

It is found in the cytoplasm. It carries out the reaction N-terminal L-lysyl-[protein] + L-leucyl-tRNA(Leu) = N-terminal L-leucyl-L-lysyl-[protein] + tRNA(Leu) + H(+). The enzyme catalyses N-terminal L-arginyl-[protein] + L-leucyl-tRNA(Leu) = N-terminal L-leucyl-L-arginyl-[protein] + tRNA(Leu) + H(+). The catalysed reaction is L-phenylalanyl-tRNA(Phe) + an N-terminal L-alpha-aminoacyl-[protein] = an N-terminal L-phenylalanyl-L-alpha-aminoacyl-[protein] + tRNA(Phe). Its function is as follows. Functions in the N-end rule pathway of protein degradation where it conjugates Leu, Phe and, less efficiently, Met from aminoacyl-tRNAs to the N-termini of proteins containing an N-terminal arginine or lysine. The polypeptide is Leucyl/phenylalanyl-tRNA--protein transferase (Pseudoalteromonas translucida (strain TAC 125)).